The chain runs to 496 residues: Stomatal closure-related actin-binding protein 1 (496 aa).

Positions 126–269 form a coiled coil; the sequence is RNKDDVEEAI…FLQLQKKLAM (144 aa).

It belongs to the SCAB family. Dimer. Dimerization is required for actin-binding activity. Expressed in roots, stems, leaves, flowers, siliques and guard cells.

It localises to the cytoplasm. It is found in the cytoskeleton. Functionally, plant-specific actin binding protein that bundles and stabilizes microfilaments (MFs). Has no nucleation or capping activity. Regulates MF reorganization during stomatal closure. The binding to F-actin is insensitive to Ca(2+) and pH. Binds weakly to inositol phosphates. The protein is Stomatal closure-related actin-binding protein 1 of Arabidopsis thaliana (Mouse-ear cress).